The primary structure comprises 259 residues: Caffeoyl-CoA O-methyltransferase 1 (259 aa).

Low complexity predominate over residues 1–14 (MATTTTEATKTSST). The interval 1 to 29 (MATTTTEATKTSSTNGEDQKQSQNLRHQE) is disordered. At A2 the chain carries N-acetylalanine. Residue K33 participates in substrate binding. Residues T75, E97, 99–100 (GV), S105, D123, and A152 contribute to the S-adenosyl-L-methionine site. D175 lines the substrate pocket. An a divalent metal cation-binding site is contributed by D175. S-adenosyl-L-methionine is bound at residue D177. The a divalent metal cation site is built by D201 and N202. N206 is a binding site for substrate.

The protein belongs to the class I-like SAM-binding methyltransferase superfamily. Cation-dependent O-methyltransferase family. CCoAMT subfamily. A divalent metal cation serves as cofactor. As to expression, expressed in stems and roots. Detected in leaves, siliques, flower buds, flowers. Expressed in the tapetum, but not in the endothecium. Detected in the vascular system of leaves and all flower organs, including stigma, stamens, petals and sepals.

The catalysed reaction is (E)-caffeoyl-CoA + S-adenosyl-L-methionine = (E)-feruloyl-CoA + S-adenosyl-L-homocysteine + H(+). It participates in aromatic compound metabolism; phenylpropanoid biosynthesis. Functionally, methylates caffeoyl-CoA to feruloyl-CoA. Has a very low activity with caffeic acid and esculetin. Involved in scopoletin biosynthesis in roots. This is Caffeoyl-CoA O-methyltransferase 1 (CCOAOMT1) from Arabidopsis thaliana (Mouse-ear cress).